The chain runs to 273 residues: Large ribosomal subunit protein uL2 (273 aa).

The tract at residues Val228 to Lys273 is disordered. Basic residues predominate over residues Lys254 to Lys273.

Belongs to the universal ribosomal protein uL2 family. In terms of assembly, part of the 50S ribosomal subunit. Forms a bridge to the 30S subunit in the 70S ribosome.

One of the primary rRNA binding proteins. Required for association of the 30S and 50S subunits to form the 70S ribosome, for tRNA binding and peptide bond formation. It has been suggested to have peptidyltransferase activity; this is somewhat controversial. Makes several contacts with the 16S rRNA in the 70S ribosome. The chain is Large ribosomal subunit protein uL2 from Rickettsia bellii (strain OSU 85-389).